A 457-amino-acid polypeptide reads, in one-letter code: SH3 domain-binding protein 5 (457 aa).

Positions 1-12 (MDTALKRSRSEE) are enriched in basic and acidic residues. A disordered region spans residues 1–68 (MDTALKRSRS…DDINRRETEL (68 aa)). Acidic residues predominate over residues 25–43 (EKEEEEERMEQGLEEEEEV). The segment at 33-267 (MEQGLEEEEE…EIHERRRSNA (235 aa)) is sufficient for interaction with RAB11A and for guanine nucleotide exchange activity. A compositionally biased stretch (basic and acidic residues) spans 44–53 (DPRIQGELEK). Coiled-coil stretches lie at residues 46 to 92 (RIQG…LAKK), 99 to 147 (DSKP…RLLE), 156 to 202 (AWQE…LEKK), and 213 to 257 (YFEL…RISD). Over residues 308–319 (NCGNLVSEDDSE) the composition is skewed to acidic residues. The interval 308 to 347 (NCGNLVSEDDSETQSVSSFSSGPTSPSEMPDQFPAVARPG) is disordered. Residues 322–334 (SVSSFSSGPTSPS) show a composition bias toward low complexity. Residue serine 353 is modified to Phosphoserine; by MAPK12 and MAPK9. Positions 371 to 427 (SECSGASSPECEVERGDRAEGAENKMSDKANNNRVLSSTSAGGGRSRSQSSTSLEGQ) are disordered. 2 positions are modified to phosphoserine: serine 377 and serine 378. Residues 382-398 (EVERGDRAEGAENKMSD) show a composition bias toward basic and acidic residues. Positions 406–427 (LSSTSAGGGRSRSQSSTSLEGQ) are enriched in low complexity. A Phosphoserine modification is found at serine 420. Position 423 is a phosphoserine; by MAPK12 (serine 423).

The protein belongs to the SH3BP5 family. As to quaternary structure, interacts with BTK. Interacts with all isoforms of MAPK8, MAPK9, MAPK10 and MAPK12. Interacts with GDP-bound and nucleotide-free forms of RAB11A.

Its subcellular location is the cytoplasmic vesicle membrane. It localises to the mitochondrion. In terms of biological role, functions as a guanine nucleotide exchange factor (GEF) with specificity for RAB11A and RAB25. Inhibits the auto- and transphosphorylation activity of BTK. Plays a negative regulatory role in BTK-related cytoplasmic signaling in B-cells. May be involved in BCR-induced apoptotic cell death. The protein is SH3 domain-binding protein 5 (Sh3bp5) of Rattus norvegicus (Rat).